The following is a 430-amino-acid chain: Glutamine synthetase, chloroplastic/mitochondrial (430 aa).

The transit peptide at 1 to 45 (MAQILAASPTCQMRVPKHSSVIASSSKLWSSVVLKQKKQSNNKVR) directs the protein to the chloroplast and mitochondrion. In terms of domain architecture, GS beta-grasp spans 77 to 157 (IIAEYIWIGG…VICDTWTPAG (81 aa)). Residues 97 to 122 (TIEKPVEDPSELPKWNYDGSSTGQAP) form a disordered region. Ser106 carries the post-translational modification Phosphoserine. The 270-residue stretch at 161–430 (PTNKRAKAAE…LAAQKLSLNV (270 aa)) folds into the GS catalytic domain.

Belongs to the glutamine synthetase family. As to quaternary structure, homooctamer. Expressed in mesophyll and epidermal cells of leaves.

Its subcellular location is the plastid. It is found in the chloroplast. The protein resides in the mitochondrion. It carries out the reaction L-glutamate + NH4(+) + ATP = L-glutamine + ADP + phosphate + H(+). Functionally, the light-modulated chloroplast/mitochondrial enzyme, encoded by a nuclear gene and expressed primarily in leaves, is responsible for the reassimilation of the ammonia generated by photorespiration. The polypeptide is Glutamine synthetase, chloroplastic/mitochondrial (GLN2) (Arabidopsis thaliana (Mouse-ear cress)).